The following is a 710-amino-acid chain: F-box only protein 40 (710 aa).

The TRAF-type zinc finger occupies 53–114 (EHTLLCPLEQ…VDSETFLHEN (62 aa)). Disordered stretches follow at residues 152–174 (DATEEEPDMNGDTSWEETGGAVG) and 234–279 (GSLG…SQEL). Positions 238-248 (KSEDKNGDVAG) are enriched in basic and acidic residues. The F-box domain maps to 572 to 626 (LNSLTSLPLEVLQYIAGFLDSISLSQLSQVSVLMRNICATLLQERGMVLSQWKKK).

As to quaternary structure, directly interacts with SKP1 and CUL1. In terms of tissue distribution, expressed only in heart and skeletal muscle.

The protein localises to the cytoplasm. In terms of biological role, probable substrate-recognition component of the SCF (SKP1-CUL1-F-box protein)-type E3 ubiquitin ligase complex that may function in myogenesis. This chain is F-box only protein 40 (Fbxo40), found in Mus musculus (Mouse).